The following is a 262-amino-acid chain: Acyl-[acyl-carrier-protein]--UDP-N-acetylglucosamine O-acyltransferase (262 aa).

The protein belongs to the transferase hexapeptide repeat family. LpxA subfamily. In terms of assembly, homotrimer.

Its subcellular location is the cytoplasm. The catalysed reaction is a (3R)-hydroxyacyl-[ACP] + UDP-N-acetyl-alpha-D-glucosamine = a UDP-3-O-[(3R)-3-hydroxyacyl]-N-acetyl-alpha-D-glucosamine + holo-[ACP]. Its pathway is glycolipid biosynthesis; lipid IV(A) biosynthesis; lipid IV(A) from (3R)-3-hydroxytetradecanoyl-[acyl-carrier-protein] and UDP-N-acetyl-alpha-D-glucosamine: step 1/6. Involved in the biosynthesis of lipid A, a phosphorylated glycolipid that anchors the lipopolysaccharide to the outer membrane of the cell. In Campylobacter curvus (strain 525.92), this protein is Acyl-[acyl-carrier-protein]--UDP-N-acetylglucosamine O-acyltransferase.